Consider the following 920-residue polypeptide: Dynamin-B (920 aa).

The segment at 65–84 is disordered; the sequence is NSNNNNNNNNNNKINKNNNN. Residues 154–448 form the Dynamin-type G domain; sequence EITLPQIIVV…LTKHIRDTFP (295 aa). The interval 164–171 is G1 motif; sequence GSQSSGKS. 164–172 contacts GTP; the sequence is GSQSSGKSS. Residues 190 to 192 are G2 motif; sequence VTR. The interval 204-241 is disordered; sequence TTSRNNVNENEDEDEDDNYYDNDNDDNSLEEWGEFGHT. The span at 212–236 shows a compositional bias: acidic residues; sequence ENEDEDEDDNYYDNDNDDNSLEEWG. The segment at 290–293 is G3 motif; that stretch reads DLPG. The G4 motif stretch occupies residues 359 to 362; the sequence is TKLD. GTP is bound by residues 359 to 365 and 390 to 393; these read TKLDLMD and NRSQ. The tract at residues 389–392 is G5 motif; sequence VNRS. Positions 680 to 790 are disordered; the sequence is FQSTSSTSSS…EIQIQQQQQQ (111 aa). Low complexity-rich tracts occupy residues 681–705 and 724–751; these read QSTS…NSNP and QIKQ…QKQQ. The stretch at 724–751 forms a coiled coil; sequence QIKQQQQQQQQQQQQSYQQQQQQQQKQQ. Over residues 765-774 the composition is skewed to pro residues; sequence PPSPPSPPQP. Over residues 775 to 790 the composition is skewed to low complexity; it reads KQQQSHEIQIQQQQQQ. The region spanning 825 to 916 is the GED domain; it reads IYLLRRLLLA…SLSQSENSDL (92 aa).

Belongs to the TRAFAC class dynamin-like GTPase superfamily. Dynamin/Fzo/YdjA family.

Its subcellular location is the cytoplasm. Its function is as follows. Enzyme hydrolyzing GTP. This chain is Dynamin-B (dymB), found in Dictyostelium discoideum (Social amoeba).